Consider the following 400-residue polypeptide: Acetylornithine aminotransferase (400 aa).

Residues 113 to 114 (GA) and Phe139 contribute to the pyridoxal 5'-phosphate site. Arg142 lines the N(2)-acetyl-L-ornithine pocket. 224-227 (DEVQ) is a pyridoxal 5'-phosphate binding site. The residue at position 253 (Lys253) is an N6-(pyridoxal phosphate)lysine. Residue Ser281 participates in N(2)-acetyl-L-ornithine binding. Residue Thr282 participates in pyridoxal 5'-phosphate binding.

Belongs to the class-III pyridoxal-phosphate-dependent aminotransferase family. ArgD subfamily. Homodimer. The cofactor is pyridoxal 5'-phosphate.

The protein localises to the cytoplasm. It carries out the reaction N(2)-acetyl-L-ornithine + 2-oxoglutarate = N-acetyl-L-glutamate 5-semialdehyde + L-glutamate. The protein operates within amino-acid biosynthesis; L-arginine biosynthesis; N(2)-acetyl-L-ornithine from L-glutamate: step 4/4. In Mycobacterium bovis (strain ATCC BAA-935 / AF2122/97), this protein is Acetylornithine aminotransferase.